The following is an 881-amino-acid chain: Probable alpha/beta-glucosidase agdC (881 aa).

An N-terminal signal peptide occupies residues 1–14 (MLRSLLLLAPLVGA). N-linked (GlcNAc...) asparagine glycans are attached at residues Asn171, Asn293, and Asn373. The active-site Nucleophile is Asp422. Residue Glu425 is part of the active site. A disordered region spans residues 440-485 (YSRDNDLPPAAPPVRPSNPRPLPGFPGDFQPSSSSKRSTKGSKVGL). The span at 448–463 (PAAPPVRPSNPRPLPG) shows a compositional bias: pro residues. N-linked (GlcNAc...) asparagine glycosylation occurs at Asn506. The active-site Proton donor is the Asp571. 3 N-linked (GlcNAc...) asparagine glycosylation sites follow: Asn572, Asn608, and Asn742.

This sequence belongs to the glycosyl hydrolase 31 family.

It is found in the secreted. It catalyses the reaction Hydrolysis of terminal, non-reducing (1-&gt;4)-linked alpha-D-glucose residues with release of alpha-D-glucose.. It carries out the reaction Hydrolysis of terminal, non-reducing beta-D-glucosyl residues with release of beta-D-glucose.. Glucosidase involved in the degradation of cellulosic biomass. Has both alpha- and beta-glucosidase activity. This chain is Probable alpha/beta-glucosidase agdC (agdC), found in Neosartorya fischeri (strain ATCC 1020 / DSM 3700 / CBS 544.65 / FGSC A1164 / JCM 1740 / NRRL 181 / WB 181) (Aspergillus fischerianus).